An 87-amino-acid chain; its full sequence is Chaperone NapD (87 aa).

This sequence belongs to the NapD family. In terms of assembly, interacts with the cytoplasmic NapA precursor.

The protein resides in the cytoplasm. Chaperone for NapA, the catalytic subunit of the periplasmic nitrate reductase. It binds directly and specifically to the twin-arginine signal peptide of NapA, preventing premature interaction with the Tat translocase and premature export. This Escherichia coli O157:H7 protein is Chaperone NapD.